The chain runs to 202 residues: Na(+)-translocating NADH-quinone reductase subunit E (202 aa).

Transmembrane regions (helical) follow at residues 11–31 (AVFI…FLAV), 39–59 (FGLG…NNLI), 81–101 (FLKF…LEMA), 114–134 (GIFL…AFMV), 144–164 (VVFG…LAAV), and 180–200 (LGIT…FSGV).

This sequence belongs to the NqrDE/RnfAE family. Composed of six subunits; NqrA, NqrB, NqrC, NqrD, NqrE and NqrF.

It localises to the cell inner membrane. It carries out the reaction a ubiquinone + n Na(+)(in) + NADH + H(+) = a ubiquinol + n Na(+)(out) + NAD(+). In terms of biological role, NQR complex catalyzes the reduction of ubiquinone-1 to ubiquinol by two successive reactions, coupled with the transport of Na(+) ions from the cytoplasm to the periplasm. NqrA to NqrE are probably involved in the second step, the conversion of ubisemiquinone to ubiquinol. This Idiomarina loihiensis (strain ATCC BAA-735 / DSM 15497 / L2-TR) protein is Na(+)-translocating NADH-quinone reductase subunit E.